Here is a 967-residue protein sequence, read N- to C-terminus: Kinesin heavy chain (967 aa).

Positions 8–326 constitute a Kinesin motor domain; that stretch reads NIKVICRVRP…LLFGQRAKTI (319 aa). 85–92 is an ATP binding site; sequence GQTSSGKT. The microtubule-binding stretch occupies residues 173-314; sequence VSSPEEVMEV…PASYNESETK (142 aa). 2 disordered regions span residues 387-411 and 923-967; these read VPAE…NEGD and KPIR…ESKA. A coiled-coil region spans residues 392 to 861; that stretch reads PATSTTSLAG…RDNADLRCEL (470 aa). Residues 862-967 form a globular region; that stretch reads PKLEKRLRAT…PIRMAPESKA (106 aa). Residues 949-958 show a composition bias toward polar residues; sequence QNGPMITSTP.

It belongs to the TRAFAC class myosin-kinesin ATPase superfamily. Kinesin family. Kinesin subfamily. Oligomer composed of two heavy chains and two light chains. Interacts with amyloid-beta precursor-like protein (via cytoplasmic domain).

It is found in the cytoplasm. It localises to the cytoskeleton. The protein localises to the cell projection. Its subcellular location is the axon. Functionally, kinesin is a microtubule-associated force-producing protein that may play a role in organelle transport. The protein is Kinesin heavy chain of Doryteuthis pealeii (Longfin inshore squid).